Consider the following 63-residue polypeptide: Adipokinetic prohormone type 1 (63 aa).

The first 22 residues, 1-22 (MVQRCALVVLLVVAVAAALCSA), serve as a signal peptide directing secretion. Residue Gln-23 is modified to Pyrrolidone carboxylic acid. Thr-32 carries the threonine amide modification.

This sequence belongs to the AKH/HRTH/RPCH family.

The protein resides in the secreted. This hormone, released from cells in the corpora cardiaca, causes release of diglycerides from the fat body and stimulation of muscles to use these diglycerides as an energy source during energy-demanding processes. This is Adipokinetic prohormone type 1 from Locusta migratoria (Migratory locust).